A 718-amino-acid polypeptide reads, in one-letter code: DNA ligase (718 aa).

NAD(+) contacts are provided by residues Asp-34–Asp-38, Ser-83–Leu-84, and Glu-115. Lys-117 serves as the catalytic N6-AMP-lysine intermediate. Positions 138, 186, 302, and 326 each coordinate NAD(+). The Zn(2+) site is built by Cys-420, Cys-423, Cys-438, and Cys-444. A BRCT domain is found at Pro-604–Asn-694.

The protein belongs to the NAD-dependent DNA ligase family. LigA subfamily. The cofactor is Mg(2+). Requires Mn(2+) as cofactor.

It carries out the reaction NAD(+) + (deoxyribonucleotide)n-3'-hydroxyl + 5'-phospho-(deoxyribonucleotide)m = (deoxyribonucleotide)n+m + AMP + beta-nicotinamide D-nucleotide.. Functionally, DNA ligase that catalyzes the formation of phosphodiester linkages between 5'-phosphoryl and 3'-hydroxyl groups in double-stranded DNA using NAD as a coenzyme and as the energy source for the reaction. It is essential for DNA replication and repair of damaged DNA. This is DNA ligase from Roseiflexus castenholzii (strain DSM 13941 / HLO8).